We begin with the raw amino-acid sequence, 733 residues long: Wall-associated receptor kinase 5 (733 aa).

Residues 1 to 23 form the signal peptide; the sequence is MKVHSLFLMAIFFYLAYTQLVKA. At 24–330 the chain is on the extracellular side; the sequence is QPRDDCQTRC…IDTPKEEPKY (307 aa). Residues N57, N77, N110, N137, N184, N206, N218, N232, and N247 are each glycosylated (N-linked (GlcNAc...) asparagine). The EGF-like 1 domain maps to 231–278; it reads GNQTCEQVVGRNICGGNSTCFDSTRGKGYNCKCLQGFDGNPYLSDGCQ. Cystine bridges form between C235–C250, C244–C261, C263–C277, C283–C296, C290–C305, and C307–C320. Residues 279-321 form the EGF-like 2; calcium-binding domain; that stretch reads DINECTTRIHNCSDTSTCENTLGSFHCQCPSGSDLNTTTMSCI. N-linked (GlcNAc...) asparagine glycosylation occurs at N289. N314 is a glycosylation site (N-linked (GlcNAc...) asparagine). The chain crosses the membrane as a helical span at residues 331-351; it reads LGWTTVLLGTTIGFLIILLTI. Residues 352–733 lie on the Cytoplasmic side of the membrane; sequence SYIQQKMRHR…VTRLDIETGR (382 aa). T397 carries the post-translational modification Phosphothreonine. Residues 408 to 691 form the Protein kinase domain; the sequence is YNESRILGQG…RVKTTKHQWS (284 aa). ATP contacts are provided by residues 414 to 422 and K436; that span reads LGQGGQGTV. Y481 carries the post-translational modification Phosphotyrosine. Catalysis depends on D533, which acts as the Proton acceptor. A phosphothreonine mark is found at T567 and T572. Y580 bears the Phosphotyrosine mark.

This sequence belongs to the protein kinase superfamily. Ser/Thr protein kinase family. In terms of tissue distribution, predominantly expressed in green tissues such as stems and leaves.

It localises to the membrane. The enzyme catalyses L-seryl-[protein] + ATP = O-phospho-L-seryl-[protein] + ADP + H(+). It catalyses the reaction L-threonyl-[protein] + ATP = O-phospho-L-threonyl-[protein] + ADP + H(+). Functionally, serine/threonine-protein kinase that may function as a signaling receptor of extracellular matrix component. Binding to pectin may have significance in the control of cell expansion, morphogenesis and development. The protein is Wall-associated receptor kinase 5 (WAK5) of Arabidopsis thaliana (Mouse-ear cress).